We begin with the raw amino-acid sequence, 1198 residues long: Fibronectin type-III domain-containing protein 3a (1198 aa).

Over residues 189–201 the composition is skewed to basic and acidic residues; sequence KLKDRHGTQKDKL. Residues 189 to 256 form a disordered region; it reads KLKDRHGTQK…SQTDVEIEEK (68 aa). A compositionally biased stretch (low complexity) spans 229-247; sequence GISTGSTKSKSVGKGKSNS. 9 Fibronectin type-III domains span residues 269–370, 374–466, 470–563, 567–661, 665–758, 762–852, 864–951, 952–1045, and 1046–1151; these read NIAK…TMSC, APNL…TSGT, TPAS…TCPD, APSK…TPAV, PCQP…TAPG, QCKP…TPAS, SEDE…TKPL, PPDP…TPKS, and VPAA…TEPP. The tract at residues 553–574 is disordered; it reads SETVDYTTCPDKPGAPSKPSVK. The chain crosses the membrane as a helical span at residues 1172–1192; that stretch reads VCAAVILALFAIFSILIAVII.

It belongs to the FNDC3 family.

The protein localises to the golgi apparatus membrane. This chain is Fibronectin type-III domain-containing protein 3a (FNDC3A), found in Gallus gallus (Chicken).